We begin with the raw amino-acid sequence, 134 residues long: B3 domain-containing protein At1g16640 (134 aa).

Residues 7–100 (VQFMKPFISE…TFYVIIYGHN (94 aa)) constitute a DNA-binding region (TF-B3).

The protein localises to the nucleus. This chain is B3 domain-containing protein At1g16640, found in Arabidopsis thaliana (Mouse-ear cress).